Here is a 187-residue protein sequence, read N- to C-terminus: Core-binding factor subunit beta (187 aa).

The residue at position 10 (serine 10) is a Phosphoserine; by CK2. The interval 139–187 (AQQAFEEARRRTREFEDRDRSHREEMEARRQQDPSPGSNLGGGDDLKLR) is disordered. Positions 144–170 (EEARRRTREFEDRDRSHREEMEARRQQ) are enriched in basic and acidic residues. Phosphoserine; by PKC is present on serine 159.

This sequence belongs to the CBF-beta family. As to quaternary structure, heterodimer with RUNX1, RUNX2 and RUNX3. Interacts with COPRS. Found in a complex with PRMT5 and RUNX1. Expressed in all tissues tested. Highest level in thymus, but also abundantly expressed in muscle, lung and brain.

It localises to the nucleus. Forms the heterodimeric complex core-binding factor (CBF) with RUNX family proteins (RUNX1, RUNX2, and RUNX3). RUNX members modulate the transcription of their target genes through recognizing the core consensus binding sequence 5'-TGTGGT-3', or very rarely, 5'-TGCGGT-3', within their regulatory regions via their runt domain, while CBFB is a non-DNA-binding regulatory subunit that allosterically enhances the sequence-specific DNA-binding capacity of RUNX. The heterodimers bind to the core site of a number of enhancers and promoters, including murine leukemia virus, polyomavirus enhancer, T-cell receptor enhancers, LCK, IL3 and GM-CSF promoters. CBF complexes repress ZBTB7B transcription factor during cytotoxic (CD8+) T cell development. They bind to RUNX-binding sequence within the ZBTB7B locus acting as transcriptional silencer and allowing for cytotoxic T cell differentiation. This Mus musculus (Mouse) protein is Core-binding factor subunit beta (Cbfb).